The chain runs to 1265 residues: Stromal processing peptidase, chloroplastic (1265 aa).

A chloroplast-targeting transit peptide spans 1–143 (MASSSSSIFT…SLRKHSQIVN (143 aa)). His-240 is a binding site for Zn(2+). Glu-243 functions as the Proton acceptor in the catalytic mechanism. His-244 contributes to the Zn(2+) binding site. Glu-314 is an active-site residue. A Zn(2+)-binding site is contributed by Glu-321.

This sequence belongs to the peptidase M16 family. It depends on Zn(2+) as a cofactor.

The protein resides in the plastid. It localises to the chloroplast stroma. In terms of biological role, cleaves presequences (transit peptides) from chloroplastic protein precursors. Initially recognizes a precursor by binding to the C-terminus of its transit peptide and then removes the transit peptide in a single endoproteolytic step. In a next step, pursues the cleavage of transit peptide to a subfragment form. The protein is Stromal processing peptidase, chloroplastic of Arabidopsis thaliana (Mouse-ear cress).